We begin with the raw amino-acid sequence, 531 residues long: Polygalacturonase (531 aa).

The first 23 residues, 1–23 (MILSHRYTLIALAAAILSSGAHA), serve as a signal peptide directing secretion. The Proton donor role is filled by Asp307. The active site involves His333. The required for PGA export across the outer membrane and catalytic activity stretch occupies residues 518–531 (AFVPLKSVAPTSPI).

This sequence belongs to the glycosyl hydrolase 28 family. Monomer.

It localises to the secreted. It carries out the reaction (1,4-alpha-D-galacturonosyl)n+m + H2O = (1,4-alpha-D-galacturonosyl)n + (1,4-alpha-D-galacturonosyl)m.. Contributes to the wilt disease production on tomato. In Ralstonia nicotianae (strain ATCC BAA-1114 / GMI1000) (Ralstonia solanacearum), this protein is Polygalacturonase (pglA).